We begin with the raw amino-acid sequence, 124 residues long: Cholera enterotoxin subunit B (124 aa).

The N-terminal stretch at 1–21 is a signal peptide; it reads MIKLKFGVFFTVLLSSAYAHG. Cysteine 30 and cysteine 107 are joined by a disulfide.

The holotoxin (choleragen) consists of a pentameric ring of B subunits whose central pore is occupied by the A subunit. The A subunit contains two chains, A1 and A2, linked by a disulfide bridge.

It is found in the secreted. The protein resides in the host cell membrane. In terms of biological role, the B subunit pentameric ring directs the A subunit to its target by binding to the GM1 gangliosides present on the surface of the intestinal epithelial cells. It can bind five GM1 gangliosides. It has no toxic activity by itself. The sequence is that of Cholera enterotoxin subunit B (ctxB) from Vibrio cholerae serotype O1 (strain ATCC 39315 / El Tor Inaba N16961).